The sequence spans 294 residues: Nucleophosmin (294 aa).

Met-1 carries the N-acetylmethionine modification. The interval 1–117 (MEDSMDMDMS…PVHISGQHLV (117 aa)) is necessary for interaction with APEX1. The required for interaction with SENP3 stretch occupies residues 1-187 (MEDSMDMDMS…DDDDDFDEEV (187 aa)). Ser-4 carries the phosphoserine; by PLK1 and PLK2 modification. Ser-10 bears the Phosphoserine mark. Lys-32 is modified (N6-acetyllysine; alternate). A Glycyl lysine isopeptide (Lys-Gly) (interchain with G-Cter in SUMO1); alternate cross-link involves residue Lys-32. Residue Lys-32 forms a Glycyl lysine isopeptide (Lys-Gly) (interchain with G-Cter in SUMO2); alternate linkage. Position 43 is a phosphoserine (Ser-43). Tyr-67 is subject to Phosphotyrosine. Ser-70 is modified (phosphoserine). Phosphothreonine is present on residues Thr-75 and Thr-95. Residues 121–132 (EDAESEEEEEEE) show a composition bias toward acidic residues. The interval 121 to 249 (EDAESEEEEE…GPSSVEDIKA (129 aa)) is disordered. A Phosphoserine; by CDK2 modification is found at Ser-125. 2 positions are modified to phosphoserine: Ser-137 and Ser-139. A Glycyl lysine isopeptide (Lys-Gly) (interchain with G-Cter in SUMO2) cross-link involves residue Lys-141. Lys-150 is modified (N6-acetyllysine; alternate). Residue Lys-150 forms a Glycyl lysine isopeptide (Lys-Gly) (interchain with G-Cter in SUMO2); alternate linkage. The Nuclear localization signal signature appears at 152-157 (PQKKVK). An N6-acetyllysine modification is found at Lys-154. Over residues 161 to 188 (DEDEDDDDDDDDDDDEDDDDDDFDEEVE) the composition is skewed to acidic residues. The interval 188 to 216 (EEKAPVKKSVRDTPAKNAQKSNQNGKDSK) is interaction with NOP2. The segment covering 189–201 (EKAPVKKSVRDTP) has biased composition (basic and acidic residues). The Nuclear localization signal motif lies at 192-198 (PVKKSVR). A Phosphothreonine; by CDK1 and CDK2 modification is found at Thr-200. Polar residues predominate over residues 203–222 (KNAQKSNQNGKDSKPSTPRS). Residue Ser-208 is modified to ADP-ribosylserine. Lys-213 is subject to N6-acetyllysine. A Glycyl lysine isopeptide (Lys-Gly) (interchain with G-Cter in SUMO2) cross-link involves residue Lys-216. Phosphothreonine; by CDK1 is present on Thr-219. The span at 223-235 (KGQESFKKQEKTP) shows a compositional bias: basic and acidic residues. Ser-227 carries the phosphoserine modification. Residue Lys-229 is modified to N6-acetyllysine. The residue at position 230 (Lys-230) is an N6-acetyllysine; alternate. A Glycyl lysine isopeptide (Lys-Gly) (interchain with G-Cter in SUMO); alternate cross-link involves residue Lys-230. Phosphothreonine occurs at positions 234 and 237. Phosphoserine occurs at positions 242 and 243. The tract at residues 243–294 (SVEDIKAKMQASIEKGGSLPKVEAKFINYVKNCFRMTDQEAIQDLWQWRKSL) is required for nucleolar localization. Lys-248 is covalently cross-linked (Glycyl lysine isopeptide (Lys-Gly) (interchain with G-Cter in SUMO1); alternate). Residues Lys-248 and Lys-250 each participate in a glycyl lysine isopeptide (Lys-Gly) (interchain with G-Cter in SUMO2); alternate cross-link. Lys-250 carries the post-translational modification N6-acetyllysine; alternate. A Phosphoserine modification is found at Ser-254. The residue at position 257 (Lys-257) is an N6-acetyllysine; alternate. A Glycyl lysine isopeptide (Lys-Gly) (interchain with G-Cter in SUMO1); alternate cross-link involves residue Lys-257. Lys-257 is covalently cross-linked (Glycyl lysine isopeptide (Lys-Gly) (interchain with G-Cter in SUMO2); alternate). Ser-260 is subject to Phosphoserine. Residues Lys-263, Lys-267, and Lys-273 each participate in a glycyl lysine isopeptide (Lys-Gly) (interchain with G-Cter in SUMO2); alternate cross-link. Residue Lys-263 forms a Glycyl lysine isopeptide (Lys-Gly) (interchain with G-Cter in SUMO); alternate linkage. N6-acetyllysine; alternate is present on residues Lys-267 and Lys-273. A Glycyl lysine isopeptide (Lys-Gly) (interchain with G-Cter in SUMO1); alternate cross-link involves residue Lys-267. N6-succinyllysine; alternate is present on Lys-267. Residue Thr-279 is modified to Phosphothreonine. At Lys-292 the chain carries N6-acetyllysine.

This sequence belongs to the nucleoplasmin family. Decamer formed by two pentameric rings associated in a head-to-head fashion. Disulfide-linked dimers under certain conditions. The SWAP complex consists of NPM1, NCL, PARP1 and SWAP70. Interacts with NSUN2 and SENP3. Interacts with the methylated form of RPS10. Interacts (via N-terminal domain) with APEX1; the interaction is RNA-dependent and decreases in hydrogen peroxide-damaged cells. Interacts with isoform 1 of NEK2. Interacts with ROCK2 and BRCA2. Interacts with RPGR. Interacts with CENPW. Interacts with EIF2AK2/PKR. Interacts with CEBPA (isoform 4). Interacts with DDX31; this interaction prevents interaction between NPM1 and HDM2. Interacts with MYC; competitive with NOP53. Interacts with NOP53; the interaction is direct and competitive with MYC. Interacts with LRRC34. Interacts with RRP1B. Interacts with NPM3. Interacts with ALKBH2. Interacts with TTF1 (via C-terminal region). Interacts with NOP2. Interacts with ARID3C (via REKLES DOMAIN); the interaction mediates ARID3C nuclear shuttling. Post-translationally, acetylated at C-terminal lysine residues, thereby increasing affinity to histones. ADP-ribosylated. In terms of processing, phosphorylated at Ser-4 by PLK1 and PLK2. Phosphorylation at Ser-4 by PLK2 in S phase is required for centriole duplication and is sufficient to trigger centriole replication. Phosphorylation at Ser-4 by PLK1 takes place during mitosis. Phosphorylated by CDK2 at Ser-125 and Thr-200. Phosphorylation at Thr-200 may trigger initiation of centrosome duplication. Phosphorylated by CDK1 at Thr-200, Thr-219, Thr-234 and Thr-237 during cell mitosis. When these four sites are phosphorated, RNA-binding activity seem to be abolished. May be phosphorylated at Ser-70 by NEK2. The Thr-200 phosphorylated form has higher affinity for ROCK2. Post-translationally, sumoylated by ARF. May be ubiquitinated. Ubiquitination leads to proteasomal degradation. Deubiquitinated by USP36.

It is found in the nucleus. Its subcellular location is the nucleolus. The protein localises to the nucleoplasm. It localises to the cytoplasm. The protein resides in the cytoskeleton. It is found in the microtubule organizing center. Its subcellular location is the centrosome. In terms of biological role, involved in diverse cellular processes such as ribosome biogenesis, centrosome duplication, protein chaperoning, histone assembly, cell proliferation, and regulation of tumor suppressors p53/TP53 and ARF. Binds ribosome presumably to drive ribosome nuclear export. Associated with nucleolar ribonucleoprotein structures and bind single-stranded nucleic acids. Acts as a chaperonin for the core histones H3, H2B and H4. Stimulates APEX1 endonuclease activity on apurinic/apyrimidinic (AP) double-stranded DNA but inhibits APEX1 endonuclease activity on AP single-stranded RNA. May exert a control of APEX1 endonuclease activity within nucleoli devoted to repair AP on rDNA and the removal of oxidized rRNA molecules. In concert with BRCA2, regulates centrosome duplication. Regulates centriole duplication: phosphorylation by PLK2 is able to trigger centriole replication. Negatively regulates the activation of EIF2AK2/PKR and suppresses apoptosis through inhibition of EIF2AK2/PKR autophosphorylation. Antagonizes the inhibitory effect of ATF5 on cell proliferation and relieves ATF5-induced G2/M blockade. In complex with MYC enhances the transcription of MYC target genes. May act as chaperonin or cotransporter in the nucleolar localization of transcription termination factor TTF1. The protein is Nucleophosmin (NPM1) of Bos taurus (Bovine).